The following is a 209-amino-acid chain: MICOS complex subunit mic19 (209 aa).

Coiled coils occupy residues 48 to 86 (LELEIQNRVAKELERLRAREQQTLAEIEKRLSEAKDTGS) and 127 to 156 (EVAAVNKELNRESVNSEIEELRVKLEGRKK).

The protein belongs to the MICOS complex subunit Mic19 family. In terms of assembly, component of the mitochondrial contact site and cristae organizing system (MICOS) complex.

Its subcellular location is the mitochondrion inner membrane. Component of the MICOS complex, a large protein complex of the mitochondrial inner membrane that plays crucial roles in the maintenance of crista junctions, inner membrane architecture, and formation of contact sites to the outer membrane. Involved in osmoadaptation. This chain is MICOS complex subunit mic19, found in Emericella nidulans (strain FGSC A4 / ATCC 38163 / CBS 112.46 / NRRL 194 / M139) (Aspergillus nidulans).